Reading from the N-terminus, the 185-residue chain is Elongation factor P (185 aa).

Belongs to the elongation factor P family.

It is found in the cytoplasm. It participates in protein biosynthesis; polypeptide chain elongation. Its function is as follows. Involved in peptide bond synthesis. Stimulates efficient translation and peptide-bond synthesis on native or reconstituted 70S ribosomes in vitro. Probably functions indirectly by altering the affinity of the ribosome for aminoacyl-tRNA, thus increasing their reactivity as acceptors for peptidyl transferase. The protein is Elongation factor P of Salinispora tropica (strain ATCC BAA-916 / DSM 44818 / JCM 13857 / NBRC 105044 / CNB-440).